The sequence spans 231 residues: Large ribosomal subunit protein uL1 (231 aa).

Belongs to the universal ribosomal protein uL1 family. In terms of assembly, part of the 50S ribosomal subunit.

Binds directly to 23S rRNA. The L1 stalk is quite mobile in the ribosome, and is involved in E site tRNA release. Its function is as follows. Protein L1 is also a translational repressor protein, it controls the translation of the L11 operon by binding to its mRNA. The chain is Large ribosomal subunit protein uL1 from Mesomycoplasma hyopneumoniae (strain 232) (Mycoplasma hyopneumoniae).